Reading from the N-terminus, the 148-residue chain is uncharacterized protein (148 aa).

The N-terminal stretch at 1–35 is a signal peptide; sequence MRCVTRTRNWWRRAARMPRAGSSAWWVAVCKQVCT.

The protein localises to the secreted. This is an uncharacterized protein from Homo sapiens (Human).